We begin with the raw amino-acid sequence, 541 residues long: Protein wntless homolog B (541 aa).

At 1–15 the chain is on the cytoplasmic side; it reads MAGAIIENMSTKKLC. The helical transmembrane segment at 16 to 36 threads the bilayer; that stretch reads MVGVALLLLQVLAFLVGGLIA. Residues 37-232 are Lumenal-facing; the sequence is PKPTTYVNPV…SIFQNGGFTM (196 aa). The helical transmembrane segment at 233–253 threads the bilayer; the sequence is VWFAMKTFLTPCIIIIMIWYW. The Cytoplasmic portion of the chain corresponds to 254 to 268; sequence RRITMMTRSPVLLEK. Residues 269 to 289 form a helical membrane-spanning segment; that stretch reads VIFALGISMTFINIPVEWFSI. Topologically, residues 290-303 are lumenal; the sequence is GYDWTWMLLFGDIR. A helical transmembrane segment spans residues 304-324; it reads QGIFYAMLLSFWIIFCGEHMM. At 325-331 the chain is on the cytoplasmic side; it reads DQAERNR. The chain crosses the membrane as a helical span at residues 332–352; it reads ISIYWKQVGPIAFGSCCLFIF. The Lumenal portion of the chain corresponds to 353–379; sequence DMCERGVQLKNPFYSIWTTDVGAEIAM. The chain crosses the membrane as a helical span at residues 380–400; the sequence is AFIIVAGICACLYFLFLCFMV. At 401–431 the chain is on the cytoplasmic side; that stretch reads YQVFRNISGKRSNLPAMSKARRLHYEGLIFR. A helical transmembrane segment spans residues 432–452; the sequence is FKFLMIITLACAALTVVFFIT. Residues 453–471 are Lumenal-facing; the sequence is TQITEGNWKLGDLSIELNS. The chain crosses the membrane as a helical span at residues 472–492; the sequence is AFFTGIYGMWNLYVFALMFLY. Topologically, residues 493-541 are cytoplasmic; sequence APSHKHYGDGQSNDGAGMSSGEELQLTTTITHIDGPTELYRLAGKEAQE.

This sequence belongs to the wntless family. Enriched in the animal hemisphere of the early cleavage embryo, where expression persists until the late gastrula stage. At the neurula stage, strongly expressed at the border of the neural plate and dorsal midline. After the neurula stage, expressed in various organs, including the eye, liver, heart, pronephros, otic vesicle, and dorsal neural tube. Expression in the developing eye is dynamic; expressed in the eye field from stages 23 to 27, and from stage 30 expression is confined to distinct regions including the central part and border of the eye.

It localises to the golgi apparatus membrane. The protein localises to the cytoplasmic vesicle membrane. Functionally, required for a subset of Wnt-dependent developmental processes, in particular, eye and pronephros development. Regulates the secretion of wnt4, which is required for eye development. The protein is Protein wntless homolog B (wls-b) of Xenopus laevis (African clawed frog).